We begin with the raw amino-acid sequence, 780 residues long: ATPase family gene 2 protein (780 aa).

Low complexity predominate over residues 1–23 (MAPKSSSSGSKKKSSASSNSADA). The interval 1–26 (MAPKSSSSGSKKKSSASSNSADAKAS) is disordered. ATP-binding positions include 286 to 293 (GPPGTGKT) and 557 to 564 (GPPGCSKT).

It belongs to the AAA ATPase family. AFG2 subfamily. As to quaternary structure, homohexamer; ATP binding induces oligomerization. Forms a ring-shaped particle of about 12 nm diameter, that displays 6-fold radial symmetry. Associates with cytoplasmic pre-60S ribosomal particles containing ARX1, ALB1, RLP24 and NOG1. Binds to pre-60S ribosomal particles soon after their export from the nucleus and is released before REI1 and LSG1 are incorporated into the particles. Hexameric form interacts with RLP24 (via C-terminal); the interaction recruits AFG2 to pre-60S ribosomal particles and promotes AFG2 ATPase activity and RLP24 release from pre-60S ribosomal particles. Interacts (via N-terminus) with nucleoporin NUP116 (via N-terminus); the interaction is required for RLP24 release from pre-60S ribosomal particles.

The protein localises to the cytoplasm. The enzyme catalyses ATP + H2O = ADP + phosphate + H(+). The hexamer is activated by RLP24 during pre-60S ribosomal particle maturation; RLP24 activates ATPase activity of both ATP-binding regions and increases cooperativity between AFG2 subunits. The second ATP-binding region is inhibited by diazaborine; the inhibition requires prior ATP binding specifically to the second ATP-binding region. Functionally, ATP-dependent chaperone which uses the energy provided by ATP hydrolysis to generate mechanical force to disassemble protein complexes. Plays an essential role in the cytoplasmic maturation steps of pre-60S ribosomal particles by promoting the release of shuttling protein RLP24 from the pre-ribosomal particles. This step facilitates the subsequent release of other shuttling proteins such as NOG1 and allows the transition of the pre-ribosomal particles to later maturation forms that bind REI1. Essential for viability. This Saccharomyces cerevisiae (strain ATCC 204508 / S288c) (Baker's yeast) protein is ATPase family gene 2 protein.